Here is a 105-residue protein sequence, read N- to C-terminus: UPF0235 protein RAF_ORF1191 (105 aa).

This sequence belongs to the UPF0235 family.

This is UPF0235 protein RAF_ORF1191 from Rickettsia africae (strain ESF-5).